A 359-amino-acid polypeptide reads, in one-letter code: Type-1 angiotensin II receptor (359 aa).

Topologically, residues 1–25 (MMLNSSTEDGIKRIQDDCPKAGRHN) are extracellular. N-linked (GlcNAc...) asparagine glycosylation is present at asparagine 4. Positions 15 and 17 each coordinate angiotensin II. 2 disulfides stabilise this stretch: cysteine 18–cysteine 274 and cysteine 101–cysteine 180. A helical transmembrane segment spans residues 26-55 (YIFVMIPTLYSIIFVVGIFGNSLAVIVIYF). Residues 56 to 61 (YMKLKT) lie on the Cytoplasmic side of the membrane. Residues 62–89 (VASVFLLNLALADLCFLLTLPLWAVYTA) traverse the membrane as a helical segment. Residues 90–98 (MEYRWPFGN) lie on the Extracellular side of the membrane. A helical transmembrane segment spans residues 99–125 (YLCKIASASVSFNLYASVFLLTCLSID). Over 126–141 (RYLAIVHPMKSRLRRT) the chain is Cytoplasmic. Residues 142–165 (MLVAKVTCIIIWLLAGLASLPAII) form a helical membrane-spanning segment. Topologically, residues 166 to 190 (HRNVFFIENTNITVCAFHYESQNST) are extracellular. Arginine 167 provides a ligand contact to angiotensin II. N-linked (GlcNAc...) asparagine glycosylation occurs at asparagine 176. Residues phenylalanine 182, histidine 183, and tyrosine 184 each contribute to the angiotensin II site. N-linked (GlcNAc...) asparagine glycosylation occurs at asparagine 188. Residues 191-216 (LPIGLGLTKNILGFLFPFLIILTSYT) form a helical membrane-spanning segment. An angiotensin II-binding site is contributed by lysine 199. Residues 217-239 (LIWKALKKAYEIQKNKPRNDDIF) are Cytoplasmic-facing. The helical transmembrane segment at 240 to 268 (KIIMAIVLFFFFSWVPHQIFTFLDVLIQL) threads the bilayer. Over 269-278 (GVIHDCRIAD) the chain is Extracellular. A helical membrane pass occupies residues 279–304 (IVDTAMPITICIAYFNNCLNPLFYGF). The Cytoplasmic portion of the chain corresponds to 305–359 (LGKKFKKYFLQLLKYIPPKAKSHSNLSTKMSTLSYRPSDNVSSSSKKPVPCFEVE). The segment covering 335–350 (STLSYRPSDNVSSSSK) has biased composition (polar residues). The segment at 335–359 (STLSYRPSDNVSSSSKKPVPCFEVE) is disordered. Residue cysteine 355 is the site of S-palmitoyl cysteine attachment.

The protein belongs to the G-protein coupled receptor 1 family. As to quaternary structure, interacts with MAS1. Interacts with ARRB1. Interacts with FLNA (via filamin repeat 21); increases PKA-mediated phosphorylation of FLNA. Post-translationally, C-terminal Ser or Thr residues may be phosphorylated.

Its subcellular location is the cell membrane. In terms of biological role, receptor for angiotensin II, a vasoconstricting peptide, which acts as a key regulator of blood pressure and sodium retention by the kidney. The activated receptor in turn couples to G-alpha proteins G(q) (GNAQ, GNA11, GNA14 or GNA15) and thus activates phospholipase C and increases the cytosolic Ca(2+) concentrations, which in turn triggers cellular responses such as stimulation of protein kinase C. The polypeptide is Type-1 angiotensin II receptor (AGTR1) (Oryctolagus cuniculus (Rabbit)).